The primary structure comprises 484 residues: Glutamate--tRNA ligase (484 aa).

The short motif at 11–21 is the 'HIGH' region element; sequence PSPTGYLHIGN. Positions 252–256 match the 'KMSKS' region motif; sequence KLSKR. ATP is bound at residue lysine 255.

It belongs to the class-I aminoacyl-tRNA synthetase family. Glutamate--tRNA ligase type 1 subfamily. As to quaternary structure, monomer.

Its subcellular location is the cytoplasm. It catalyses the reaction tRNA(Glu) + L-glutamate + ATP = L-glutamyl-tRNA(Glu) + AMP + diphosphate. Functionally, catalyzes the attachment of glutamate to tRNA(Glu) in a two-step reaction: glutamate is first activated by ATP to form Glu-AMP and then transferred to the acceptor end of tRNA(Glu). The protein is Glutamate--tRNA ligase of Staphylococcus aureus (strain bovine RF122 / ET3-1).